A 311-amino-acid chain; its full sequence is Methionyl-tRNA formyltransferase (311 aa).

112–115 (SLLP) contacts (6S)-5,6,7,8-tetrahydrofolate.

It belongs to the Fmt family.

The catalysed reaction is L-methionyl-tRNA(fMet) + (6R)-10-formyltetrahydrofolate = N-formyl-L-methionyl-tRNA(fMet) + (6S)-5,6,7,8-tetrahydrofolate + H(+). Its function is as follows. Attaches a formyl group to the free amino group of methionyl-tRNA(fMet). The formyl group appears to play a dual role in the initiator identity of N-formylmethionyl-tRNA by promoting its recognition by IF2 and preventing the misappropriation of this tRNA by the elongation apparatus. The chain is Methionyl-tRNA formyltransferase from Rhizobium leguminosarum bv. trifolii (strain WSM2304).